The sequence spans 103 residues: MEAQNIRIRLKAFDHRVLDQATGEIADTARRTGALIRGPIPLPTRIEKFCVNRGPHIDKKSREQFEVRTYKRLLDIVQPNAATVDALMKLDLAAGVNVEIKLA.

This sequence belongs to the universal ribosomal protein uS10 family. Part of the 30S ribosomal subunit.

Functionally, involved in the binding of tRNA to the ribosomes. In Novosphingobium aromaticivorans (strain ATCC 700278 / DSM 12444 / CCUG 56034 / CIP 105152 / NBRC 16084 / F199), this protein is Small ribosomal subunit protein uS10.